The primary structure comprises 288 residues: MSLSNFNLQSKVLLHPLVLFQIIDAYERRAKDVPEVLGTLLGTVAGKTGRIEITNCFSVVHRMHGDNNCHIDLDLKYDNDMLELAQIAYPQEKVLGWFSTGKSVSAAAVELHEYYERQCHNGQPLHLLMDTSLRGQRMNTRIFCAVATGVPGGTKGLMFSLLPMDIYFGSPDIVAMRHMGRQCAQPTKDAGRLLPELEQVVDATKDIQQKLDLVLRYINDILNRKRRPDNTVGRALHDVLTSVPMVEAERFRHMFNTNMRDLLMSLTLSSMIKTQLQLSERLSNMVDA.

The 138-residue stretch at 12–149 (VLLHPLVLFQ…TRIFCAVATG (138 aa)) folds into the MPN domain.

It belongs to the eIF-3 subunit F family. Component of the eukaryotic translation initiation factor 3 (eIF-3) complex. The eIF-3 complex interacts with pix.

Its subcellular location is the cytoplasm. Component of the eukaryotic translation initiation factor 3 (eIF-3) complex, which is involved in protein synthesis of a specialized repertoire of mRNAs and, together with other initiation factors, stimulates binding of mRNA and methionyl-tRNAi to the 40S ribosome. The eIF-3 complex specifically targets and initiates translation of a subset of mRNAs involved in cell proliferation. The protein is Eukaryotic translation initiation factor 3 subunit F-2 of Drosophila pseudoobscura pseudoobscura (Fruit fly).